Consider the following 163-residue polypeptide: Auxin-responsive protein IAA5 (163 aa).

Residues 15-19 (LRLGL) carry the EAR-like (transcriptional repression) motif. In terms of domain architecture, PB1 spans 74 to 160 (SSYVKVSVDG…KRLRIMKRSC (87 aa)).

This sequence belongs to the Aux/IAA family. Homodimers and heterodimers. Highly expressed in stems and flowers.

The protein resides in the nucleus. In terms of biological role, aux/IAA proteins are short-lived transcriptional factors that function as repressors of early auxin response genes at low auxin concentrations. Repression is thought to result from the interaction with auxin response factors (ARFs), proteins that bind to the auxin-responsive promoter element (AuxRE). Formation of heterodimers with ARF proteins may alter their ability to modulate early auxin response genes expression. In Arabidopsis thaliana (Mouse-ear cress), this protein is Auxin-responsive protein IAA5 (IAA5).